The following is a 470-amino-acid chain: Methylenetetrahydrofolate--tRNA-(uracil-5-)-methyltransferase TrmFO (470 aa).

Residue 10-15 (GAGLAG) coordinates FAD.

It belongs to the MnmG family. TrmFO subfamily. Requires FAD as cofactor.

The protein resides in the cytoplasm. It catalyses the reaction uridine(54) in tRNA + (6R)-5,10-methylene-5,6,7,8-tetrahydrofolate + NADH + H(+) = 5-methyluridine(54) in tRNA + (6S)-5,6,7,8-tetrahydrofolate + NAD(+). The catalysed reaction is uridine(54) in tRNA + (6R)-5,10-methylene-5,6,7,8-tetrahydrofolate + NADPH + H(+) = 5-methyluridine(54) in tRNA + (6S)-5,6,7,8-tetrahydrofolate + NADP(+). Catalyzes the folate-dependent formation of 5-methyl-uridine at position 54 (M-5-U54) in all tRNAs. The chain is Methylenetetrahydrofolate--tRNA-(uracil-5-)-methyltransferase TrmFO from Prochlorococcus marinus subsp. pastoris (strain CCMP1986 / NIES-2087 / MED4).